The primary structure comprises 316 residues: Ribosomal protein L11 methyltransferase (316 aa).

S-adenosyl-L-methionine is bound by residues T161, G182, D204, and N249.

Belongs to the methyltransferase superfamily. PrmA family.

It localises to the cytoplasm. The enzyme catalyses L-lysyl-[protein] + 3 S-adenosyl-L-methionine = N(6),N(6),N(6)-trimethyl-L-lysyl-[protein] + 3 S-adenosyl-L-homocysteine + 3 H(+). Methylates ribosomal protein L11. In Ruminiclostridium cellulolyticum (strain ATCC 35319 / DSM 5812 / JCM 6584 / H10) (Clostridium cellulolyticum), this protein is Ribosomal protein L11 methyltransferase.